Consider the following 262-residue polypeptide: Type III pantothenate kinase (262 aa).

An ATP-binding site is contributed by 10–17; it reads DIGNTTTV. Residue 110–113 participates in substrate binding; that stretch reads GADR. Asp112 (proton acceptor) is an active-site residue. Position 134 (Asp134) interacts with K(+). Residue Thr137 participates in ATP binding. Thr189 lines the substrate pocket.

The protein belongs to the type III pantothenate kinase family. As to quaternary structure, homodimer. NH4(+) serves as cofactor. Requires K(+) as cofactor.

The protein localises to the cytoplasm. The enzyme catalyses (R)-pantothenate + ATP = (R)-4'-phosphopantothenate + ADP + H(+). It participates in cofactor biosynthesis; coenzyme A biosynthesis; CoA from (R)-pantothenate: step 1/5. In terms of biological role, catalyzes the phosphorylation of pantothenate (Pan), the first step in CoA biosynthesis. The polypeptide is Type III pantothenate kinase (Deinococcus radiodurans (strain ATCC 13939 / DSM 20539 / JCM 16871 / CCUG 27074 / LMG 4051 / NBRC 15346 / NCIMB 9279 / VKM B-1422 / R1)).